The primary structure comprises 366 residues: UDP-N-acetylglucosamine--N-acetylmuramyl-(pentapeptide) pyrophosphoryl-undecaprenol N-acetylglucosamine transferase (366 aa).

UDP-N-acetyl-alpha-D-glucosamine-binding positions include 14-16, asparagine 125, arginine 168, serine 196, and glutamine 297; that span reads TGG.

It belongs to the glycosyltransferase 28 family. MurG subfamily.

Its subcellular location is the cell inner membrane. The enzyme catalyses di-trans,octa-cis-undecaprenyl diphospho-N-acetyl-alpha-D-muramoyl-L-alanyl-D-glutamyl-meso-2,6-diaminopimeloyl-D-alanyl-D-alanine + UDP-N-acetyl-alpha-D-glucosamine = di-trans,octa-cis-undecaprenyl diphospho-[N-acetyl-alpha-D-glucosaminyl-(1-&gt;4)]-N-acetyl-alpha-D-muramoyl-L-alanyl-D-glutamyl-meso-2,6-diaminopimeloyl-D-alanyl-D-alanine + UDP + H(+). It participates in cell wall biogenesis; peptidoglycan biosynthesis. Cell wall formation. Catalyzes the transfer of a GlcNAc subunit on undecaprenyl-pyrophosphoryl-MurNAc-pentapeptide (lipid intermediate I) to form undecaprenyl-pyrophosphoryl-MurNAc-(pentapeptide)GlcNAc (lipid intermediate II). The chain is UDP-N-acetylglucosamine--N-acetylmuramyl-(pentapeptide) pyrophosphoryl-undecaprenol N-acetylglucosamine transferase from Rhodopseudomonas palustris (strain BisB5).